Reading from the N-terminus, the 320-residue chain is MKQEKYGVLMVNLGTPDAPTPQAVRRYLAEFLSDRRVVDTPRLLWWPLLRGIILPIRSPRVAKLYQSVWMEGGSPLLVISRRQHQALAARMPDTPVELGMSYGSPSLRSALDKLLAQGVTQLVVLPMYPQYSCSTTAAVWDGLAAQLRDNRQLPAIRFIRDYAEHPAYIAALKHRVEQSFAEHGEPDRLVISYHGIPVRYANEGDDYPQRCRATTEALIAALGLPEGKIMMTFQSRFGREPWLTPYTDETMQGLPAQGIKHIQIMCPGFAADCLETLEEIQEQNREIFLHAGGEAFHYIPALNDDPLHIDLLEQLVGKVE.

Fe cation is bound by residues His194 and Glu275.

The protein belongs to the ferrochelatase family.

It localises to the cytoplasm. It catalyses the reaction heme b + 2 H(+) = protoporphyrin IX + Fe(2+). The protein operates within porphyrin-containing compound metabolism; protoheme biosynthesis; protoheme from protoporphyrin-IX: step 1/1. Catalyzes the ferrous insertion into protoporphyrin IX. This chain is Ferrochelatase, found in Pectobacterium atrosepticum (strain SCRI 1043 / ATCC BAA-672) (Erwinia carotovora subsp. atroseptica).